Consider the following 125-residue polypeptide: Phosphoribosyl-AMP cyclohydrolase (125 aa).

Mg(2+) is bound at residue aspartate 74. Cysteine 75 serves as a coordination point for Zn(2+). Mg(2+) is bound by residues aspartate 76 and aspartate 78. Zn(2+)-binding residues include cysteine 92 and cysteine 99.

This sequence belongs to the PRA-CH family. In terms of assembly, homodimer. Mg(2+) serves as cofactor. The cofactor is Zn(2+).

It is found in the cytoplasm. It carries out the reaction 1-(5-phospho-beta-D-ribosyl)-5'-AMP + H2O = 1-(5-phospho-beta-D-ribosyl)-5-[(5-phospho-beta-D-ribosylamino)methylideneamino]imidazole-4-carboxamide. It functions in the pathway amino-acid biosynthesis; L-histidine biosynthesis; L-histidine from 5-phospho-alpha-D-ribose 1-diphosphate: step 3/9. Its function is as follows. Catalyzes the hydrolysis of the adenine ring of phosphoribosyl-AMP. The sequence is that of Phosphoribosyl-AMP cyclohydrolase from Desulfatibacillum aliphaticivorans.